The sequence spans 591 residues: L-fucose isomerase (591 aa).

Catalysis depends on proton acceptor residues Glu-337 and Asp-361. Residues Glu-337, Asp-361, and His-528 each contribute to the Mn(2+) site.

This sequence belongs to the L-fucose isomerase family. Homohexamer. It depends on Mn(2+) as a cofactor.

Its subcellular location is the cytoplasm. It catalyses the reaction L-fucose = L-fuculose. The protein operates within carbohydrate degradation; L-fucose degradation; L-lactaldehyde and glycerone phosphate from L-fucose: step 1/3. In terms of biological role, converts the aldose L-fucose into the corresponding ketose L-fuculose. The polypeptide is L-fucose isomerase (Escherichia coli O6:H1 (strain CFT073 / ATCC 700928 / UPEC)).